Reading from the N-terminus, the 144-residue chain is Probable DNA-directed RNA polymerases I and III subunit RPAC2 (144 aa).

The segment at K14 to E47 is disordered. The span at E18–L38 shows a compositional bias: acidic residues.

Belongs to the archaeal Rpo11/eukaryotic RPB11/RPC19 RNA polymerase subunit family. Component of the RNA polymerase I (Pol I) and RNA polymerase III (Pol III) complexes consisting of at least 13 and 17 subunits, respectively.

It localises to the nucleus. Its function is as follows. DNA-dependent RNA polymerase catalyzes the transcription of DNA into RNA using the four ribonucleoside triphosphates as substrates. Common core component of RNA polymerases I and III which synthesize ribosomal RNA precursors and small RNAs, such as 5S rRNA and tRNAs, respectively. The chain is Probable DNA-directed RNA polymerases I and III subunit RPAC2 (rpac-19) from Caenorhabditis elegans.